The sequence spans 1401 residues: DNA-directed RNA polymerase subunit beta' (1401 aa).

Positions 71, 73, 86, and 89 each coordinate Zn(2+). Residues aspartate 462, aspartate 464, and aspartate 466 each coordinate Mg(2+). Zn(2+) is bound by residues cysteine 810, cysteine 884, cysteine 891, and cysteine 894. A disordered region spans residues 1377-1401; it reads RRKGTGAESATPMLADMANDPAAAE.

The protein belongs to the RNA polymerase beta' chain family. As to quaternary structure, the RNAP catalytic core consists of 2 alpha, 1 beta, 1 beta' and 1 omega subunit. When a sigma factor is associated with the core the holoenzyme is formed, which can initiate transcription. It depends on Mg(2+) as a cofactor. The cofactor is Zn(2+).

It catalyses the reaction RNA(n) + a ribonucleoside 5'-triphosphate = RNA(n+1) + diphosphate. DNA-dependent RNA polymerase catalyzes the transcription of DNA into RNA using the four ribonucleoside triphosphates as substrates. This chain is DNA-directed RNA polymerase subunit beta', found in Rhizobium meliloti (strain 1021) (Ensifer meliloti).